Here is a 172-residue protein sequence, read N- to C-terminus: uncharacterized protein (172 aa).

This is an uncharacterized protein from Bacillus subtilis (strain 168).